A 395-amino-acid chain; its full sequence is Phosphoprotein (395 aa).

2 disordered regions span residues 31-109 (VETV…DTQL) and 126-214 (NKSS…PASV). A compositionally biased stretch (basic and acidic residues) spans 65–74 (TPDRQNRSDK). 3 stretches are compositionally biased toward polar residues: residues 75–98 (QPST…QPPT), 146–168 (LPTQ…QNRA), and 203–212 (SGQSQDNTPA). The interval 222-285 (DFVQAMMSMM…LGMMKILDPG (64 aa)) is multimerization.

This sequence belongs to the rubulavirus/avulavirus P protein family. As to quaternary structure, homotetramer. Interacts (via multimerization domain) with polymerase L; this interaction forms the polymerase L-P complex. Interacts (via N-terminus) with N0 (via Ncore); this interaction allows P to chaperon N0 to avoid N polymerization before encapsidation. Interacts (via C-terminus) with N-RNA template; this interaction positions the polymerase on the template for both transcription and replication.

In terms of biological role, essential cofactor of the RNA polymerase L that plays a central role in the transcription and replication by forming the polymerase complex with RNA polymerase L and recruiting L to the genomic N-RNA template for RNA synthesis. Also plays a central role in the encapsidation of nascent RNA chains by forming the encapsidation complex with the nucleocapsid protein N (N-P complex). Acts as a chaperone for newly synthesized free N protein, so-called N0, allowing encapsidation of nascent RNA chains during replication. The nucleoprotein protein N prevents excessive phosphorylation of P, which leads to down-regulation of viral transcription/ replication. Participates, together with N, in the formation of viral factories (viroplasms), which are large inclusions in the host cytoplasm where replication takes place. This Gallus gallus (Chicken) protein is Phosphoprotein (P/C).